The sequence spans 152 residues: uncharacterized protein (152 aa).

Residues Met-1 to Cys-24 form the signal peptide.

This is an uncharacterized protein from Acheta domesticus (House cricket).